Reading from the N-terminus, the 175-residue chain is Inosine/xanthosine triphosphatase (175 aa).

8-13 (TTNPAK) provides a ligand contact to substrate. 2 residues coordinate Mg(2+): E38 and E68. 68-69 (EA) lines the substrate pocket.

Belongs to the YjjX NTPase family. In terms of assembly, homodimer. The cofactor is Mg(2+). Requires Mn(2+) as cofactor.

The catalysed reaction is XTP + H2O = XDP + phosphate + H(+). It catalyses the reaction ITP + H2O = IDP + phosphate + H(+). Phosphatase that hydrolyzes non-canonical purine nucleotides such as XTP and ITP to their respective diphosphate derivatives. Probably excludes non-canonical purines from DNA/RNA precursor pool, thus preventing their incorporation into DNA/RNA and avoiding chromosomal lesions. The polypeptide is Inosine/xanthosine triphosphatase (yjjX) (Escherichia coli O127:H6 (strain E2348/69 / EPEC)).